Reading from the N-terminus, the 533-residue chain is Conglutin beta 2 (533 aa).

An N-terminal signal peptide occupies residues 1 to 30 (MGKMRVRFPTLVLVLGIVFLMAVSIGIAYG). Residues 31–108 (EKDVLKSHER…EQQQGSPSYS (78 aa)) constitute a propeptide that is removed on maturation. Composition is skewed to basic and acidic residues over residues 37–51 (SHERPEEREQEEWQP) and 79–99 (SGYERRQYHERSEQREEREQE). Disordered regions lie at residues 37 to 123 (SHER…QRFQ) and 315 to 337 (KHAQSSSGKDKPSDSGPFNLRSN). Cupin type-1 domains follow at residues 115 to 273 (YHFS…EEIQ) and 332 to 494 (FNLR…EDIE). N-linked (GlcNAc...) asparagine glycosylation is found at asparagine 363 and asparagine 444. The disordered stretch occupies residues 503-533 (SYFANGQPQQQQQQQSEKEGRRGRRGSSLPF).

It belongs to the 7S seed storage protein family. As to quaternary structure, multimers. Give rise to a complex array of processed forms, due to a large number of processing sites and changes in glycosylation.

Seed storage protein. Accumulates during seed development and is hydrolyzed after germination to provide a carbon and nitrogen source for the developing seedling. Its function is as follows. Has a lectin-like activity. This chain is Conglutin beta 2, found in Lupinus albus (White lupine).